Here is a 241-residue protein sequence, read N- to C-terminus: Platelet-derived growth factor subunit B (241 aa).

An N-terminal signal peptide occupies residues 1–20 (MNRCWALFLSLCCYLRLVSA). Residues 21–81 (EGDPIPEELY…ELESLARGRR (61 aa)) constitute a propeptide, removed in mature form. Asn-63 is a glycosylation site (N-linked (GlcNAc...) asparagine). 3 disulfide bridges follow: Cys-97/Cys-141, Cys-130/Cys-178, and Cys-134/Cys-180. Positions 191–241 (RSPGGSQEQRAKTPQTRVTIRTVRVRRPPKGKHRKFKHTHDKTALKETLGA) are cleaved as a propeptide — removed in mature form. Over residues 216 to 230 (RRPPKGKHRKFKHTH) the composition is skewed to basic residues. A disordered region spans residues 216–241 (RRPPKGKHRKFKHTHDKTALKETLGA).

It belongs to the PDGF/VEGF growth factor family. In terms of assembly, antiparallel homodimer; disulfide-linked. Antiparallel heterodimer with PDGFA; disulfide-linked. The PDGFB homodimer interacts with PDGFRA and PDGFRB homodimers, and with heterodimers formed by PDGFRA and PDGFRB. The heterodimer composed of PDGFA and PDGFB interacts with PDGFRB homodimers, and with heterodimers formed by PDGFRA and PDGFRB. Interacts with XLKD1. Interacts with LRP1. Interacts with SORL1 (via the N-terminal ectodomain). Interacts with CD82; this interaction inhibits PDGFB-mediated signaling pathway. In terms of tissue distribution, expressed at high levels in the heart, brain (sustantia nigra), placenta and fetal kidney. Expressed at moderate levels in the brain (hippocampus), skeletal muscle, kidney and lung.

The protein resides in the secreted. Growth factor that plays an essential role in the regulation of embryonic development, cell proliferation, cell migration, survival and chemotaxis. Potent mitogen for cells of mesenchymal origin. Required for normal proliferation and recruitment of pericytes and vascular smooth muscle cells in the central nervous system, skin, lung, heart and placenta. Required for normal blood vessel development, and for normal development of kidney glomeruli. Plays an important role in wound healing. Signaling is modulated by the formation of heterodimers with PDGFA. This chain is Platelet-derived growth factor subunit B (PDGFB), found in Homo sapiens (Human).